A 92-amino-acid chain; its full sequence is Small ribosomal subunit protein uS19 (92 aa).

It belongs to the universal ribosomal protein uS19 family.

Protein S19 forms a complex with S13 that binds strongly to the 16S ribosomal RNA. The protein is Small ribosomal subunit protein uS19 of Methylorubrum extorquens (strain CM4 / NCIMB 13688) (Methylobacterium extorquens).